Reading from the N-terminus, the 491-residue chain is Ketol-acid reductoisomerase (NADP(+)) (491 aa).

Residues 15–208 (AQLGKCRFMG…GGHRAGVLES (194 aa)) enclose the KARI N-terminal Rossmann domain. Residues 45 to 48 (CGAQ), arginine 68, arginine 76, serine 78, and 108 to 110 (DKQ) contribute to the NADP(+) site. Histidine 132 is an active-site residue. Residue glycine 158 coordinates NADP(+). 2 KARI C-terminal knotted domains span residues 209-344 (SFVA…TAPQ) and 345-484 (YEGK…MTDM). Mg(2+) contacts are provided by aspartate 217, glutamate 221, glutamate 389, and glutamate 393. Serine 414 is a binding site for substrate.

Belongs to the ketol-acid reductoisomerase family. It depends on Mg(2+) as a cofactor.

It catalyses the reaction (2R)-2,3-dihydroxy-3-methylbutanoate + NADP(+) = (2S)-2-acetolactate + NADPH + H(+). The catalysed reaction is (2R,3R)-2,3-dihydroxy-3-methylpentanoate + NADP(+) = (S)-2-ethyl-2-hydroxy-3-oxobutanoate + NADPH + H(+). It functions in the pathway amino-acid biosynthesis; L-isoleucine biosynthesis; L-isoleucine from 2-oxobutanoate: step 2/4. The protein operates within amino-acid biosynthesis; L-valine biosynthesis; L-valine from pyruvate: step 2/4. In terms of biological role, involved in the biosynthesis of branched-chain amino acids (BCAA). Catalyzes an alkyl-migration followed by a ketol-acid reduction of (S)-2-acetolactate (S2AL) to yield (R)-2,3-dihydroxy-isovalerate. In the isomerase reaction, S2AL is rearranged via a Mg-dependent methyl migration to produce 3-hydroxy-3-methyl-2-ketobutyrate (HMKB). In the reductase reaction, this 2-ketoacid undergoes a metal-dependent reduction by NADPH to yield (R)-2,3-dihydroxy-isovalerate. The chain is Ketol-acid reductoisomerase (NADP(+)) from Shigella flexneri.